A 420-amino-acid polypeptide reads, in one-letter code: Nucleobindin-2 (420 aa).

Positions 1-24 (MRWRIIQVQYCFLLVPCMLTALEA) are cleaved as a signal peptide. The DNA-binding element occupies 171–223 (RTRHEEFKKYEMMKEHERREYLKTLSEEKRKEEESKFEEMKRKHEDHPKVNHP). A disordered region spans residues 193–225 (KTLSEEKRKEEESKFEEMKRKHEDHPKVNHPGS). The tract at residues 213-420 (KHEDHPKVNH…AGELKFEPHT (208 aa)) is binds to necdin. EF-hand domains are found at residues 241–276 (PNDF…ELEK) and 293–328 (ERLR…KEFL). Residues Asp-254, Asn-256, Asp-258, Glu-265, Asp-306, Asn-308, Asp-310, and Glu-317 each contribute to the Ca(2+) site. A GBA motif is present at residues 304 to 334 (EIDNNKDRLVTLEEFLRATEKKEFLEPDSWE). At Ser-332 the chain carries Phosphoserine. Residues 365–389 (AEELQKQKEDLQRQHDHLEAQKQEY) are compositionally biased toward basic and acidic residues. A disordered region spans residues 365 to 420 (AEELQKQKEDLQRQHDHLEAQKQEYHQAVQHLEQKKLQQGIAPSGPAGELKFEPHT).

The protein belongs to the nucleobindin family. In terms of assembly, interacts (via GBA motif) with guanine nucleotide-binding protein G(i) alpha subunit GNAI3. Preferentially interacts with inactive rather than active GNAI3. Interaction with GNAI3 is inhibited when NUCB2 binds calcium, probably due to a conformational change which renders the GBA motif inaccessible. Binds to the postmitotic growth suppressor NDN; coexpression abolishes NUCB2 secretion. Interacts with MC4R. Found in liver, heart, thymus, muscle, intestine, kidney, lung, spleen and throughout the brain, in cerebral cortex, hippocampus, hypothalamus and medulla oblongata. Nucb2 and necdin levels were higher in postmitotic neurons.

The protein localises to the cytoplasm. Its subcellular location is the perikaryon. The protein resides in the endoplasmic reticulum. It is found in the golgi apparatus. It localises to the nucleus envelope. The protein localises to the membrane. Its subcellular location is the secreted. In terms of biological role, calcium-binding protein which may have a role in calcium homeostasis. Acts as a non-receptor guanine nucleotide exchange factor which binds to and activates guanine nucleotide-binding protein (G-protein) alpha subunit GNAI3. Functionally, anorexigenic peptide, seems to play an important role in hypothalamic pathways regulating food intake and energy homeostasis, acting in a leptin-independent manner. May also exert hypertensive roles and modulate blood pressure through directly acting on peripheral arterial resistance. In intestinal epithelial cells, plays a role in the inhibition of hepatic glucose production via MC4R receptor leading to increased cyclic adenosine monophosphate (cAMP) levels and glucagon-like peptide 1 (GLP-1) secretion. The chain is Nucleobindin-2 (Nucb2) from Mus musculus (Mouse).